The chain runs to 393 residues: S-adenosylmethionine synthase 1 (393 aa).

Glu9 contacts Mg(2+). His15 is a binding site for ATP. Glu43 lines the K(+) pocket. Positions 56 and 99 each coordinate L-methionine. Cys114 is modified (S-nitrosocysteine). ATP contacts are provided by residues 167-169 (DGK), 235-238 (SGRF), Asp246, 252-253 (RK), Ala269, Lys273, and Lys277. An L-methionine-binding site is contributed by Asp246. Lys277 is a binding site for L-methionine.

Belongs to the AdoMet synthase family. As to quaternary structure, homotetramer. Interacts with GRF3. The cofactor is Mn(2+). Mg(2+) is required as a cofactor. It depends on Co(2+) as a cofactor. Requires K(+) as cofactor. S-nitrosylated in the presence of NO. The inhibition of SAM1 activity by S-nitrosylation could contribute to the cross-talk between ethylene and NO signaling. As to expression, highly expressed in stems and roots.

It is found in the cytoplasm. The enzyme catalyses L-methionine + ATP + H2O = S-adenosyl-L-methionine + phosphate + diphosphate. It participates in amino-acid biosynthesis; S-adenosyl-L-methionine biosynthesis; S-adenosyl-L-methionine from L-methionine: step 1/1. Reversibly inhibited by NO. Inhibited by 5,5'-dithiobis-2-nitrobenzoic acid (DTNB) and N-ethylmaleimide (NEM) (in vitro). Functionally, catalyzes the formation of S-adenosylmethionine from methionine and ATP. The reaction comprises two steps that are both catalyzed by the same enzyme: formation of S-adenosylmethionine (AdoMet) and triphosphate, and subsequent hydrolysis of the triphosphate. This is S-adenosylmethionine synthase 1 (SAM1) from Arabidopsis thaliana (Mouse-ear cress).